Consider the following 155-residue polypeptide: Peptidyl-prolyl cis-trans isomerase ppi1 (155 aa).

The region spanning 1–154 is the PPIase cyclophilin-type domain; that stretch reads MANVELQTSL…EPLKIIKAVA (154 aa).

Belongs to the cyclophilin-type PPIase family. PPIL1 subfamily. In terms of assembly, interacts with cwf13/snw1.

The catalysed reaction is [protein]-peptidylproline (omega=180) = [protein]-peptidylproline (omega=0). Its function is as follows. PPIases accelerate the folding of proteins. It catalyzes the cis-trans isomerization of proline imidic peptide bonds in oligopeptides. The polypeptide is Peptidyl-prolyl cis-trans isomerase ppi1 (ppi1) (Schizosaccharomyces pombe (strain 972 / ATCC 24843) (Fission yeast)).